Here is a 78-residue protein sequence, read N- to C-terminus: UPF0248 protein Msed_0897 (78 aa).

Belongs to the UPF0248 family.

The sequence is that of UPF0248 protein Msed_0897 from Metallosphaera sedula (strain ATCC 51363 / DSM 5348 / JCM 9185 / NBRC 15509 / TH2).